The chain runs to 573 residues: 2-succinyl-5-enolpyruvyl-6-hydroxy-3-cyclohexene-1-carboxylate synthase (573 aa).

It belongs to the TPP enzyme family. MenD subfamily. Homodimer. Mg(2+) serves as cofactor. Mn(2+) is required as a cofactor. The cofactor is thiamine diphosphate.

It catalyses the reaction isochorismate + 2-oxoglutarate + H(+) = 5-enolpyruvoyl-6-hydroxy-2-succinyl-cyclohex-3-ene-1-carboxylate + CO2. The protein operates within quinol/quinone metabolism; 1,4-dihydroxy-2-naphthoate biosynthesis; 1,4-dihydroxy-2-naphthoate from chorismate: step 2/7. Its pathway is quinol/quinone metabolism; menaquinone biosynthesis. Its function is as follows. Catalyzes the thiamine diphosphate-dependent decarboxylation of 2-oxoglutarate and the subsequent addition of the resulting succinic semialdehyde-thiamine pyrophosphate anion to isochorismate to yield 2-succinyl-5-enolpyruvyl-6-hydroxy-3-cyclohexene-1-carboxylate (SEPHCHC). The polypeptide is 2-succinyl-5-enolpyruvyl-6-hydroxy-3-cyclohexene-1-carboxylate synthase (Shewanella sp. (strain MR-4)).